Consider the following 357-residue polypeptide: Dual-specificity RNA methyltransferase RlmN (357 aa).

Catalysis depends on glutamate 89, which acts as the Proton acceptor. A Radical SAM core domain is found at 109-340; it reads EGEKYTVCVS…CTIRESKALD (232 aa). Residues cysteine 116 and cysteine 345 are joined by a disulfide bond. 3 residues coordinate [4Fe-4S] cluster: cysteine 123, cysteine 127, and cysteine 130. S-adenosyl-L-methionine is bound by residues 173–174, serine 203, 226–228, and asparagine 302; these read GE and SLH. The active-site S-methylcysteine intermediate is the cysteine 345.

This sequence belongs to the radical SAM superfamily. RlmN family. It depends on [4Fe-4S] cluster as a cofactor.

The protein localises to the cytoplasm. The catalysed reaction is adenosine(2503) in 23S rRNA + 2 reduced [2Fe-2S]-[ferredoxin] + 2 S-adenosyl-L-methionine = 2-methyladenosine(2503) in 23S rRNA + 5'-deoxyadenosine + L-methionine + 2 oxidized [2Fe-2S]-[ferredoxin] + S-adenosyl-L-homocysteine. It catalyses the reaction adenosine(37) in tRNA + 2 reduced [2Fe-2S]-[ferredoxin] + 2 S-adenosyl-L-methionine = 2-methyladenosine(37) in tRNA + 5'-deoxyadenosine + L-methionine + 2 oxidized [2Fe-2S]-[ferredoxin] + S-adenosyl-L-homocysteine. In terms of biological role, specifically methylates position 2 of adenine 2503 in 23S rRNA and position 2 of adenine 37 in tRNAs. m2A2503 modification seems to play a crucial role in the proofreading step occurring at the peptidyl transferase center and thus would serve to optimize ribosomal fidelity. The sequence is that of Dual-specificity RNA methyltransferase RlmN from Helicobacter pylori (strain J99 / ATCC 700824) (Campylobacter pylori J99).